An 864-amino-acid chain; its full sequence is Disintegrin and metalloproteinase domain-containing protein 15 (864 aa).

Positions 1-17 are cleaved as a signal peptide; sequence MRLALLWALGLLGAGSP. Positions 17–49 are disordered; the sequence is PRPSPPLPNIGGTEEEQQASPERTQSRSLENQV. A propeptide spanning residues 18 to 208 is cleaved from the precursor; that stretch reads RPSPPLPNIG…EQHHLRRLKR (191 aa). Over residues 34–49 the composition is skewed to polar residues; that stretch reads QASPERTQSRSLENQV. The N-linked (GlcNAc...) asparagine glycan is linked to Asn-57. A Cysteine switch motif is present at residues 178 to 185; sequence HTCAPSWH. A Zn(2+)-binding site is contributed by Cys-180. Over 209 to 698 the chain is Extracellular; the sequence is DVVTETKIVE…QLRATSSLTT (490 aa). The 202-residue stretch at 215–416 folds into the Peptidase M12B domain; sequence KIVELVIVAD…GMGSCLFEWP (202 aa). N-linked (GlcNAc...) asparagine glycosylation occurs at Asn-239. Intrachain disulfides connect Cys-325–Cys-411, Cys-367–Cys-395, Cys-369–Cys-378, and Cys-482–Cys-502. Residue His-350 coordinates Zn(2+). Residue Glu-351 is part of the active site. Residues His-354 and His-360 each coordinate Zn(2+). N-linked (GlcNAc...) asparagine glycans are attached at residues Asn-391 and Asn-394. The 88-residue stretch at 423-510 folds into the Disintegrin domain; the sequence is SSLCGNMFVD…QCPPDIRLGD (88 aa). Asn-608 and Asn-613 each carry an N-linked (GlcNAc...) asparagine glycan. Cystine bridges form between Cys-659/Cys-669, Cys-663/Cys-675, and Cys-677/Cys-686. Positions 659 to 687 constitute an EGF-like domain; sequence CRSKCHGHGVCDSSRHCHCDEGWAPPDCM. The chain crosses the membrane as a helical span at residues 699–719; sequence GLLLSLLLLLVLVLLGASYWY. Phosphotyrosine; by HCK and LCK is present on residues Tyr-717 and Tyr-737. The Cytoplasmic portion of the chain corresponds to 720–864; sequence RARLHQRLCQ…PPPAASSLYL (145 aa). Residues 738-864 form a disordered region; it reads RAAQSGPPER…PPPAASSLYL (127 aa). Residues 753–765 show a composition bias toward polar residues; the sequence is RAQQMPGTKQANV. Pro residues-rich tracts occupy residues 768 to 780 and 810 to 825; these read PVPP…PNPV and PQGP…PLPA. Positions 816-822 match the SH3-binding motif; sequence PPPPRKP. Low complexity predominate over residues 826–850; it reads NPQGRPPLGDLPGPGDGSLQLVVPS. Residues 851–857 carry the SH3-binding motif; it reads RPAPPPP.

In terms of assembly, interacts with ITAGV-ITGB3 (vitronectin receptor). Interacts with SH3GL2 and SNX9; this interaction occurs preferentially with ADAM15 precursor, rather than the processed form, suggesting it occurs in a secretory pathway compartment prior to the medial Golgi. Interacts with ITAG9-ITGB1. Interacts specifically with Src family protein-tyrosine kinases (PTKs). Interacts with SH3PXD2A. Interacts with ITAGV-ITGB1. Interacts with GRB2, HCK, ITSN1, ITSN2, LYN, MAPK1, MAPK3, NCF1, NCK1, nephrocystin, PTK6, SNX33, LCK and SRC. It depends on Zn(2+) as a cofactor. Post-translationally, the precursor is cleaved by a furin endopeptidase. Phosphorylation increases association with PTKs. As to expression, predominantly expressed in brain, spinal cord, sciatic nerve and lung. Expressed at lower levels in all other tissues. In the peripheral nervous system, expressed predominantly by Schwann cells. In the central nervous system, preferentially expressed by neuronal cells.

It is found in the endomembrane system. Its subcellular location is the cell junction. The protein localises to the adherens junction. The protein resides in the cell projection. It localises to the cilium. It is found in the flagellum. Its subcellular location is the cytoplasmic vesicle. The protein localises to the secretory vesicle. The protein resides in the acrosome. Active metalloproteinase with gelatinolytic and collagenolytic activity. Plays a role in the wound healing process. Mediates both heterotypic intraepithelial cell/T-cell interactions and homotypic T-cell aggregation. Inhibits beta-1 integrin-mediated cell adhesion and migration of airway smooth muscle cells. Suppresses cell motility on or towards fibronectin possibly by driving alpha-v/beta-1 integrin (ITAGV-ITGB1) cell surface expression via ERK1/2 inactivation. Cleaves E-cadherin in response to growth factor deprivation. Plays a role in glomerular cell migration. Plays a role in pathological neovascularization. May play a role in cartilage remodeling. May be proteolytically processed, during sperm epididymal maturation and the acrosome reaction. May play a role in sperm-egg binding through its disintegrin domain. The polypeptide is Disintegrin and metalloproteinase domain-containing protein 15 (Adam15) (Rattus norvegicus (Rat)).